The chain runs to 684 residues: Probable pectin methyltransferase QUA2 (684 aa).

The disordered stretch occupies residues 1–35 (MSMPLQRGISGVRVSDSSDDLRDSQMKDKTERARS). Residues 1–86 (MSMPLQRGIS…RHRLMLLFLK (86 aa)) lie on the Cytoplasmic side of the membrane. A compositionally biased stretch (basic and acidic residues) spans 19 to 35 (DDLRDSQMKDKTERARS). A helical; Signal-anchor for type II membrane protein transmembrane segment spans residues 87–107 (ISLVLIVVIALAGSFWWTISI). Over 108 to 684 (STSSRGHVYH…QKPFTKRQSI (577 aa)) the chain is Lumenal. N-linked (GlcNAc...) asparagine glycans are attached at residues Asn-161 and Asn-476.

This sequence belongs to the methyltransferase superfamily. In terms of tissue distribution, ubiquitous.

The protein resides in the golgi apparatus membrane. The protein operates within glycan metabolism; pectin biosynthesis. Its function is as follows. May be involved in the synthesis of homogalacturonan. Required for normal cell adhesion and plant development. The chain is Probable pectin methyltransferase QUA2 (QUA2) from Arabidopsis thaliana (Mouse-ear cress).